A 153-amino-acid chain; its full sequence is Arachidonate 5-lipoxygenase-activating protein (153 aa).

Over 1 to 8 the chain is Lumenal; sequence MDQETVGN. Residues 9 to 30 traverse the membrane as a helical segment; sequence VVLLAIVTLISVIQNGFFAHKV. Over 31 to 52 the chain is Cytoplasmic; sequence EHESKTQNGRSFQRTGTLAFER. The helical transmembrane segment at 53–77 threads the bilayer; the sequence is VYTANQNCVDAYPTFLVMLWSAGLL. Topologically, residues 78 to 80 are lumenal; sequence CSQ. Residues 81–102 form a helical membrane-spanning segment; sequence VPAAFAGLMYLFVRQKYFVGYL. Residues 103-107 lie on the Cytoplasmic side of the membrane; it reads GERRQ. An intramembrane segment occupies 108 to 115; sequence STPGYIFG. The helical transmembrane segment at 116 to 128 threads the bilayer; that stretch reads KRIILFLFLMSLA. The Lumenal portion of the chain corresponds to 129 to 153; it reads GIFNYYLILFFGSDFENYIKTITTT.

The protein belongs to the MAPEG family. Homotrimer. Interacts with LTC4S and ALOX5.

The protein localises to the nucleus membrane. It is found in the endoplasmic reticulum membrane. In terms of biological role, required for leukotriene biosynthesis by ALOX5 (5-lipoxygenase). Anchors ALOX5 to the membrane. Binds arachidonic acid, and could play an essential role in the transfer of arachidonic acid to ALOX5. Binds to MK-886, a compound that blocks the biosynthesis of leukotrienes. This Equus caballus (Horse) protein is Arachidonate 5-lipoxygenase-activating protein (ALOX5AP).